Reading from the N-terminus, the 254-residue chain is Nodulation protein J (254 aa).

6 consecutive transmembrane segments (helical) span residues 25-45 (ASVL…GVGL), 60-80 (FLAC…EMLY), 106-126 (LIGE…IVAV), 133-153 (YIPG…ALIF), 169-189 (LFAF…GVIV), and 230-250 (LLLS…VICV). The 227-residue stretch at 25-251 (ASVLGSVIDP…FISAKVICVR (227 aa)) folds into the ABC transmembrane type-2 domain.

The protein belongs to the ABC-2 integral membrane protein family. Lipooligosaccharide exporter (TC 3.A.1.102) subfamily. As to quaternary structure, the complex is composed of two ATP-binding proteins (NodI) and two transmembrane proteins (NodJ).

It localises to the cell inner membrane. Part of the ABC transporter complex NodIJ involved in the export of the nodulation factors (Nod factors), the bacterial signal molecules that induce symbiosis and subsequent nodulation induction. Nod factors are LCO (lipo-chitin oligosaccharide), a modified beta-1,4-linked N-acetylglucosamine oligosaccharide. This subunit encodes the transporter. The sequence is that of Nodulation protein J (nodJ) from Azorhizobium caulinodans (strain ATCC 43989 / DSM 5975 / JCM 20966 / LMG 6465 / NBRC 14845 / NCIMB 13405 / ORS 571).